Here is a 729-residue protein sequence, read N- to C-terminus: Phenylalanine ammonia-lyase (729 aa).

Residue Tyr-77 is the Proton donor/acceptor of the active site. The segment at residues 182 to 184 (ASG) is a cross-link (5-imidazolinone (Ala-Gly)). Ser-183 carries the post-translational modification 2,3-didehydroalanine (Ser). (E)-cinnamate contacts are provided by Asn-241, Gln-336, Arg-342, Asn-372, Lys-443, Glu-471, and Asn-474.

Belongs to the PAL/histidase family. Contains an active site 4-methylidene-imidazol-5-one (MIO), which is formed autocatalytically by cyclization and dehydration of residues Ala-Ser-Gly.

The protein resides in the cytoplasm. It catalyses the reaction L-phenylalanine = (E)-cinnamate + NH4(+). The protein operates within secondary metabolite biosynthesis. Its pathway is phenylpropanoid metabolism; trans-cinnamate biosynthesis; trans-cinnamate from L-phenylalanine: step 1/1. In terms of biological role, phenylalanine ammonia-lyase; part of the gene cluster that mediates the biosynthesis of squalestatin S1 (SQS1, also known as zaragozic acid A), a heavily oxidized fungal polyketide that offers potent cholesterol lowering activity by targeting squalene synthase (SS). SQS1 is composed of a 2,8-dioxobicyclic[3.2.1]octane-3,4,5-tricarboxyclic acid core that is connected to two lipophilic polyketide arms. These initial steps feature the priming of an unusual benzoic acid starter unit onto the highly reducing polyketide synthase pks2, followed by oxaloacetate extension and product release to generate a tricarboxylic acid containing product. The phenylalanine ammonia lyase (PAL) M7 and the acyl-CoA ligase M9 are involved in transforming phenylalanine into benzoyl-CoA. The citrate synthase-like protein R3 is involved in connecting the C-alpha-carbons of the hexaketide chain and oxaloacetate to afford the tricarboxylic acid unit. The potential hydrolytic enzymes, M8 and M10, are in close proximity to pks2 and may participate in product release. On the other side, the tetraketide arm is synthesized by a the squalestatin tetraketide synthase pks1 and enzymatically esterified to the core in the last biosynthetic step, by the acetyltransferase M4. The biosynthesis of the tetraketide must involve 3 rounds of chain extension. After the first and second rounds methyl-transfer occurs, and in all rounds of extension the ketoreductase and dehydratase are active. The enoyl reductase and C-MeT of pks1 are not active in the final round of extension. The acetyltransferase M4 appears to have a broad substrate selectivity for its acyl CoA substrate, allowing the in vitro synthesis of novel squalestatins. The biosynthesis of SQS1 requires several oxidative steps likely performed by oxidoreductases M1, R1 and R2. Finally, in support of the identification of the cluster as being responsible for SQS1 production, the cluster contains a gene encoding a putative squalene synthase (SS) R6, suggesting a likely mechanism for self-resistance. This chain is Phenylalanine ammonia-lyase, found in Phoma sp. (strain ATCC 20986 / MF5453).